A 345-amino-acid polypeptide reads, in one-letter code: Ferrochelatase (345 aa).

Fe cation contacts are provided by H215 and E296.

Belongs to the ferrochelatase family.

It localises to the cytoplasm. It catalyses the reaction heme b + 2 H(+) = protoporphyrin IX + Fe(2+). The protein operates within porphyrin-containing compound metabolism; protoheme biosynthesis; protoheme from protoporphyrin-IX: step 1/1. Catalyzes the ferrous insertion into protoporphyrin IX. Essential for normal nodule development. The protein is Ferrochelatase of Bradyrhizobium diazoefficiens (strain JCM 10833 / BCRC 13528 / IAM 13628 / NBRC 14792 / USDA 110).